Consider the following 176-residue polypeptide: Scytalone dehydratase-like protein AacuK (176 aa).

Substrate is bound by residues tyrosine 26 and tyrosine 46. Active-site residues include histidine 81 and histidine 107.

This sequence belongs to the scytalone dehydratase family.

It participates in secondary metabolite biosynthesis. Its function is as follows. Scytalone dehydratase-like protein; part of the gene cluster that mediates the biosynthesis of the tetrahydroxanthone dimer secalonic acid D. The pathway begins with the synthesis of atrochrysone thioester by the polyketide synthase AacuL. The atrochrysone carboxyl ACP thioesterase AacuM then breaks the thioester bond and releases the atrochrysone carboxylic acid from AacuL. Atrochrysone carboxylic acid is decarboxylated by the decarboxylase AacuI, and oxidized by the anthrone oxygenase AacuG to yield emodin. Emodin is then reduced to emodin hydroquinone by a yet unidentified oxidoreductase. A-ring reduction by the short chain dehydrogenase AacuN, dehydration by the scytalone dehydratase-like protein AacuK and probable spontaneous re-oxidation, results in overall deoxygenation to chrysophanol. Baeyer-Villiger oxidation by the Baeyer-Villiger monooxygenase (BVMO) AacuH then yields monodictyphenone. Monodictyphenone is transformed into compounds with the tetrahydroxanthone skeleton via methylesterification by the methyltransferase AacuQ, followed by the action of the flavin-dependent monooxygenase AacuC, the isomerase AacuP, and the short chain dehydrogenase/reductase AacuF or AacuD. AacuF and AacuD should accept the same compound as a substrate but perform the ketoreduction with a different stereoselectivity, thus yielding blennolides B and A, respectively. In the final step of the biosynthesis, the cytochrome P450 monooxygenase AacuE accepts blennolide B and/or blennolide A to conduct the dimerization reaction to furnish the tetrahydroxanthone dimers, secalonic acids D, B, and F. The protein is Scytalone dehydratase-like protein AacuK of Aspergillus aculeatus (strain ATCC 16872 / CBS 172.66 / WB 5094).